Consider the following 548-residue polypeptide: MSSMAKSPDMRTPGCCSPLRTKELLERQRSSRCTPAKGYLTPRNCQSPKHPEMRIPSIFVTDADYGLERPKQLLQRLERSLYRSSSASKVPPKHSLLASQNRQRTWEGPKTPEFRSRTNKTIPASEPRPRRAKELLEDLRSKHQGTPATKIPSQRNPKENQELSKSHTCIPSSEPQPIRPKLILERERQESITNRLASTSIDRLKTKPPRSSFTSSRLLVPQMGFSYPKDPKRLHESDKGIKLTTSKRKLDFKTELGTDWLRRELEKIGKEWRKKTDYQLRQLISGFVKQLVRLLPFNGITFSHLSRDCYVQQMVEALQQLQYTKKVNKSWLQTPNSTQAIAHVLELLNFLLDVLEHRKGEGMCALPVVSEKQRIEQLASASGTSYDVMSLQQKFENIKIEKERLNNYQESLMPESPVSKDMDKVTERDGNQDFVRLLDFQKETLHELQLQRLRLQEFSELVSLAKIKLKRCCKANKQCIEAFNDQIQDLADCVVLRNRNIGLLTQLHLNDNPKEEELHERMKQLQRLYEDNYSNLLQLNIKPPQGSP.

Disordered stretches follow at residues 1-51 (MSSM…PKHP) and 82-181 (YRSS…IRPK). Composition is skewed to basic and acidic residues over residues 20 to 29 (RTKELLERQR), 104 to 116 (RTWEGPKTPEFRS), and 127 to 141 (PRPRRAKELLEDLRS). Residues 100 to 253 (QNRQRTWEGP…TTSKRKLDFK (154 aa)) are important for kinetochore and microtubule localization. Residues 144 to 155 (QGTPATKIPSQR) are compositionally biased toward polar residues. The SXIP motif 1 signature appears at 149–152 (TKIP). Positions 156–165 (NPKENQELSK) are enriched in basic and acidic residues. Residues 166–175 (SHTCIPSSEP) are compositionally biased toward polar residues. The SXIP motif 2 signature appears at 168–171 (TCIP). The CH (calponin-homology)-like region, which is not required for kinetochore and microtubule localization stretch occupies residues 237-372 (SDKGIKLTTS…MCALPVVSEK (136 aa)). Residues 386–457 (YDVMSLQQKF…LQLQRLRLQE (72 aa)) adopt a coiled-coil conformation.

Interacts with Eb1 via the two SxIP motifs; the interaction is not required for kebab kinetochore localization.

Its subcellular location is the cytoplasm. The protein resides in the perinuclear region. It is found in the chromosome. The protein localises to the centromere. It localises to the kinetochore. Its subcellular location is the cytoskeleton. The protein resides in the spindle. This is Kinetochore and Eb1-associated basic protein from Drosophila melanogaster (Fruit fly).